The chain runs to 426 residues: MFTFSSSFMFDFELTRLLGSASSGGCDVGEFKSAVGKIKKDDPESWSVAWKEQAERAQRIGDQAAKAGYRLLARNAYLRASNYFRVTPYMFSNDDARVVPLIEQSISSFKKAAVLMDGEVICVEIPYEKGITLPGYLFLPPSYARLPGKVPIVMYAAGADSTKEELYFLYGHTGPQLGYAVLCLEGPGQGLLLKKSKVPLRPDFEVVAEKIVEFLDNLSESRPTLELDTGRLAMAGAATGGYFALRAATNPRVKACISIDPFFSLWELCLSRAPKAFFKLWDSGWVPDSTFDTFTDVHGRGNFQSGWEINLGRSSMGAEKPTAMFRRFKDFTLEPAAGEVPILDKIRCAVFLTGPGAGQDMYSSAEESTFKIHRLLSNVPDSNKEVWVPTDVAEGGLTAKIGAWALLAQKTFEFLDKHFDIKRPEL.

Belongs to the AB hydrolase superfamily. As to quaternary structure, homodimer.

It participates in mycotoxin biosynthesis. Alpha/beta hydrolasee; part of the gene cluster that mediates the biosynthesis of pyrrocidines, fungal natural products containing a macrocyclic para-cyclophane connected to a decahydrofluorene ring system that show potent antibiotic activities toward Gram-negative bacteria. Within the pathway, pydG catalyzes the Knoevenagel condensation that affords the 3-pyrrolin-2-one ring, using as substrate the polyketide-tyrosyl acyl thioester product of pydA. The pathway begins with the PKS-NRPS pydA which, with the help of the trans-enoyl reductase pydC, synthesizes the polyketide-tyrosyl acyl thioester product which can be reductively off-loaded by the terminal reductase (R) domain in pydA. The alpha/beta hydrolase pydG is then required to catalyze the subsequent Knoevenagel condensation that affords the 3-pyrrolin-2-one ring, whereas the four proteins pydB, pydE, pydX and pydZ then function synergistically to form the cyclophane. PydB and the membrane-bound pydX and pydZ are lipid-binding proteins that can sequester and mold the pdyG product into the inverse S-shape. Binding of the medium chain reductase pydE to the complex would trigger the cascade oxidative cyclization. PydY is involved in the Diels-Alder cycloaddition that forms the decahydrofluorene core. Additional non-enzymatic hydroxylation yields pyrrocidine A2 which can be further reduced into pyrrocidine B by an endogenous reductase. The polypeptide is Alpha/beta hydrolase pydG (Acremonium sp).